The sequence spans 249 residues: MAYDIISDIHGCYDEMIALMQKLGYEVKDGTPVHSEDRTLVFAGDLTDRGPKSVEVMRFVAKAYEKGAVRYVPGNHCNKLYRYLKGNPVKVMHGLETTAAELKELSPADRTEVSRQFIRLYESAPLYDILHNGDLVVAHAGIKADDIGKYSRKVKEFVLYGDITGETHPDGRPVRRDWAAAYEGKAWIVYGHTPVKRPRIVNRTINIDTGCVFGNQLTGFRFPEHETVSVESSMPYDASRFREDHGRQA.

This sequence belongs to the PrpE family. The cofactor is Ni(2+).

The enzyme catalyses P(1),P(4)-bis(5'-guanosyl) tetraphosphate + H2O = GMP + GTP + 2 H(+). Asymmetrically hydrolyzes Ap4p to yield AMP and ATP. The polypeptide is Bis(5'-nucleosyl)-tetraphosphatase PrpE [asymmetrical] (Bacillus velezensis (strain DSM 23117 / BGSC 10A6 / LMG 26770 / FZB42) (Bacillus amyloliquefaciens subsp. plantarum)).